A 213-amino-acid polypeptide reads, in one-letter code: uncharacterized protein (213 aa).

This is an uncharacterized protein from Acidianus two-tailed virus (ATV).